The sequence spans 998 residues: Bifunctional glutamine synthetase adenylyltransferase/adenylyl-removing enzyme (998 aa).

The adenylyl removase stretch occupies residues 1–487; that stretch reads MVVTKPATQR…LHAKLFYQPL (487 aa). The segment at 492–998 is adenylyl transferase; the sequence is GPAGLEIRHG…KAVVCKVFGS (507 aa).

This sequence belongs to the GlnE family. Mg(2+) is required as a cofactor.

The enzyme catalyses [glutamine synthetase]-O(4)-(5'-adenylyl)-L-tyrosine + phosphate = [glutamine synthetase]-L-tyrosine + ADP. It catalyses the reaction [glutamine synthetase]-L-tyrosine + ATP = [glutamine synthetase]-O(4)-(5'-adenylyl)-L-tyrosine + diphosphate. Its function is as follows. Involved in the regulation of glutamine synthetase GlnA, a key enzyme in the process to assimilate ammonia. When cellular nitrogen levels are high, the C-terminal adenylyl transferase (AT) inactivates GlnA by covalent transfer of an adenylyl group from ATP to specific tyrosine residue of GlnA, thus reducing its activity. Conversely, when nitrogen levels are low, the N-terminal adenylyl removase (AR) activates GlnA by removing the adenylyl group by phosphorolysis, increasing its activity. The regulatory region of GlnE binds the signal transduction protein PII (GlnB) which indicates the nitrogen status of the cell. This Mycolicibacterium paratuberculosis (strain ATCC BAA-968 / K-10) (Mycobacterium paratuberculosis) protein is Bifunctional glutamine synthetase adenylyltransferase/adenylyl-removing enzyme.